The sequence spans 255 residues: Fumarate reductase cytochrome b subunit (255 aa).

A run of 5 helical transmembrane segments spans residues Thr-33–Ile-53, Ile-78–Leu-98, Trp-126–Val-146, Phe-168–Tyr-188, and Ile-208–Ile-228. Heme b contacts are provided by His-44, His-93, His-143, and His-182.

Belongs to the diheme cytochrome b FrdC family. Part of an enzyme complex containing three subunits: a flavoprotein (frdA), an iron-sulfur protein (frdB), and diheme cytochrome b (frdC). Heme b is required as a cofactor.

Its subcellular location is the cell inner membrane. Its function is as follows. The fumarate reductase enzyme complex is required for fumarate respiration. This subunit anchors the complex in the membrane and binds a diheme cytochrome b. This Helicobacter pylori (strain J99 / ATCC 700824) (Campylobacter pylori J99) protein is Fumarate reductase cytochrome b subunit (frdC).